The primary structure comprises 417 residues: NADH-quinone oxidoreductase subunit D (417 aa).

This sequence belongs to the complex I 49 kDa subunit family. In terms of assembly, NDH-1 is composed of 14 different subunits. Subunits NuoB, C, D, E, F, and G constitute the peripheral sector of the complex.

Its subcellular location is the cell inner membrane. The catalysed reaction is a quinone + NADH + 5 H(+)(in) = a quinol + NAD(+) + 4 H(+)(out). In terms of biological role, NDH-1 shuttles electrons from NADH, via FMN and iron-sulfur (Fe-S) centers, to quinones in the respiratory chain. The immediate electron acceptor for the enzyme in this species is believed to be ubiquinone. Couples the redox reaction to proton translocation (for every two electrons transferred, four hydrogen ions are translocated across the cytoplasmic membrane), and thus conserves the redox energy in a proton gradient. In Francisella tularensis subsp. mediasiatica (strain FSC147), this protein is NADH-quinone oxidoreductase subunit D.